A 75-amino-acid polypeptide reads, in one-letter code: Small ribosomal subunit protein bS18 (75 aa).

It belongs to the bacterial ribosomal protein bS18 family. Part of the 30S ribosomal subunit. Forms a tight heterodimer with protein bS6.

Binds as a heterodimer with protein bS6 to the central domain of the 16S rRNA, where it helps stabilize the platform of the 30S subunit. The sequence is that of Small ribosomal subunit protein bS18 from Buchnera aphidicola subsp. Schizaphis graminum (strain Sg).